We begin with the raw amino-acid sequence, 98 residues long: MGGKGGKGGKGLGKVGAKKRHRRVIRENIQGITKPAIRRLARRGGVKRTLSGLVYDETRNVLKVFLENVVRDAVTYTEHARRKTVTALDVVYALKRQG.

Gly residues predominate over residues 1–14 (MGGKGGKGGKGLGK). Residues 1–20 (MGGKGGKGGKGLGKVGAKKR) form a disordered region.

The protein belongs to the histone H4 family. As to quaternary structure, the nucleosome is a histone octamer containing two molecules each of H2A, H2B, H3 and H4 assembled in one H3-H4 heterotetramer and two H2A-H2B heterodimers. The octamer wraps approximately 147 bp of DNA.

Its subcellular location is the nucleus. It is found in the chromosome. Core component of nucleosome. Nucleosomes wrap and compact DNA into chromatin, limiting DNA accessibility to the cellular machineries which require DNA as a template. Histones thereby play a central role in transcription regulation, DNA repair, DNA replication and chromosomal stability. DNA accessibility is regulated via a complex set of post-translational modifications of histones, also called histone code, and nucleosome remodeling. This chain is Histone H4-1, found in Blepharisma japonicum.